Consider the following 571-residue polypeptide: Proline--tRNA ligase (571 aa).

The protein belongs to the class-II aminoacyl-tRNA synthetase family. ProS type 1 subfamily. In terms of assembly, homodimer.

The protein resides in the cytoplasm. It carries out the reaction tRNA(Pro) + L-proline + ATP = L-prolyl-tRNA(Pro) + AMP + diphosphate. Catalyzes the attachment of proline to tRNA(Pro) in a two-step reaction: proline is first activated by ATP to form Pro-AMP and then transferred to the acceptor end of tRNA(Pro). As ProRS can inadvertently accommodate and process non-cognate amino acids such as alanine and cysteine, to avoid such errors it has two additional distinct editing activities against alanine. One activity is designated as 'pretransfer' editing and involves the tRNA(Pro)-independent hydrolysis of activated Ala-AMP. The other activity is designated 'posttransfer' editing and involves deacylation of mischarged Ala-tRNA(Pro). The misacylated Cys-tRNA(Pro) is not edited by ProRS. This is Proline--tRNA ligase from Pseudomonas aeruginosa (strain UCBPP-PA14).